Reading from the N-terminus, the 156-residue chain is Endoribonuclease YbeY (156 aa).

The Zn(2+) site is built by His115, His119, and His125.

The protein belongs to the endoribonuclease YbeY family. It depends on Zn(2+) as a cofactor.

The protein localises to the cytoplasm. Single strand-specific metallo-endoribonuclease involved in late-stage 70S ribosome quality control and in maturation of the 3' terminus of the 16S rRNA. This Mannheimia succiniciproducens (strain KCTC 0769BP / MBEL55E) protein is Endoribonuclease YbeY.